A 29-amino-acid polypeptide reads, in one-letter code: Cytochrome c oxidase subunit 7A2, mitochondrial (29 aa).

Lysine 10 is modified (N6-acetyllysine).

It belongs to the cytochrome c oxidase VIIa family. Component of the cytochrome c oxidase (complex IV, CIV), a multisubunit enzyme composed of 14 subunits. The complex is composed of a catalytic core of 3 subunits MT-CO1, MT-CO2 and MT-CO3, encoded in the mitochondrial DNA, and 11 supernumerary subunits COX4I, COX5A, COX5B, COX6A, COX6B, COX6C, COX7A, COX7B, COX7C, COX8 and NDUFA4, which are encoded in the nuclear genome. The complex exists as a monomer or a dimer and forms supercomplexes (SCs) in the inner mitochondrial membrane with NADH-ubiquinone oxidoreductase (complex I, CI) and ubiquinol-cytochrome c oxidoreductase (cytochrome b-c1 complex, complex III, CIII), resulting in different assemblies (supercomplex SCI(1)III(2)IV(1) and megacomplex MCI(2)III(2)IV(2)). Interacts with PET100.

Its subcellular location is the mitochondrion inner membrane. Its pathway is energy metabolism; oxidative phosphorylation. Its function is as follows. Component of the cytochrome c oxidase, the last enzyme in the mitochondrial electron transport chain which drives oxidative phosphorylation. The respiratory chain contains 3 multisubunit complexes succinate dehydrogenase (complex II, CII), ubiquinol-cytochrome c oxidoreductase (cytochrome b-c1 complex, complex III, CIII) and cytochrome c oxidase (complex IV, CIV), that cooperate to transfer electrons derived from NADH and succinate to molecular oxygen, creating an electrochemical gradient over the inner membrane that drives transmembrane transport and the ATP synthase. Cytochrome c oxidase is the component of the respiratory chain that catalyzes the reduction of oxygen to water. Electrons originating from reduced cytochrome c in the intermembrane space (IMS) are transferred via the dinuclear copper A center (CU(A)) of subunit 2 and heme A of subunit 1 to the active site in subunit 1, a binuclear center (BNC) formed by heme A3 and copper B (CU(B)). The BNC reduces molecular oxygen to 2 water molecules using 4 electrons from cytochrome c in the IMS and 4 protons from the mitochondrial matrix. The polypeptide is Cytochrome c oxidase subunit 7A2, mitochondrial (COX7A2) (Canis lupus familiaris (Dog)).